A 767-amino-acid polypeptide reads, in one-letter code: Cullin-1 (767 aa).

In terms of domain architecture, Cullin neddylation spans 699–760; sequence DRKLLLQSAI…EKEYLERQGR (62 aa). K713 participates in a covalent cross-link: Glycyl lysine isopeptide (Lys-Gly) (interchain with G-Cter in NEDD8).

It belongs to the cullin family. As to quaternary structure, component of multiple Cul1-RING E3 ubiquitin-protein ligase complexes commonly known as SCF (SKP1-CUL1-F-box) complexes, consisting of cul1, skp1, pip1 and a variable F-box domain-containing protein as substrate-specific subunit. Binds to the pop1 homodimer, the pop2 homodimer and the pop1/pop2 heterodimer forming the SCF(pop1-pop2) complex. Interacts with pof3, pof14 and skp1. In terms of processing, neddylated; enhancing the ubiquitin-ligase activity.

It localises to the cytoplasm. It participates in protein modification; protein ubiquitination. In terms of biological role, core component of multiple cullin-RING-based SCF (SKP1-CUL1-F-box protein) E3 ubiquitin-protein ligase complexes, which mediate the ubiquitination of target proteins. The functional specificity of the SCF complex depends on the F-box protein as substrate recognition component. SCF(pop1-pop2) is required for the maintenance of ploidy and directs ubiquitination of cig2. The polypeptide is Cullin-1 (cul1) (Schizosaccharomyces pombe (strain 972 / ATCC 24843) (Fission yeast)).